A 125-amino-acid chain; its full sequence is MTPSTSDARSRRRSAEPFLWLLFSAGGMVTALVAPVLLLLFGLAFPLGWLDAPDHGHLLAMVRNPITKLVVLVLVVLALFHAAHRFRFVLDHGLQLGRFDRVIALWCYGMAVLGSATAGWMLLTM.

3 helical membrane-spanning segments follow: residues 29-49 (VTALVAPVLLLLFGLAFPLGW), 64-84 (NPITKLVVLVLVVLALFHAAH), and 102-122 (VIALWCYGMAVLGSATAGWML).

It belongs to the FrdD family. As to quaternary structure, part of an enzyme complex containing four subunits: a flavoprotein (FrdA), an iron-sulfur protein (FrdB), and two hydrophobic anchor proteins (FrdC and FrdD).

The protein resides in the cell membrane. Functionally, anchors the catalytic components of the fumarate reductase complex to the cell membrane, binds quinones. The polypeptide is Fumarate reductase subunit D (Mycobacterium bovis (strain BCG / Tokyo 172 / ATCC 35737 / TMC 1019)).